We begin with the raw amino-acid sequence, 480 residues long: Protein nucleotidyltransferase YdiU (480 aa).

ATP-binding residues include glycine 86, glycine 88, arginine 89, lysine 109, aspartate 121, glycine 122, arginine 172, and arginine 179. The active-site Proton acceptor is aspartate 248. Residues asparagine 249 and aspartate 258 each contribute to the Mg(2+) site. Aspartate 258 provides a ligand contact to ATP.

Belongs to the SELO family. Requires Mg(2+) as cofactor. Mn(2+) serves as cofactor.

The enzyme catalyses L-seryl-[protein] + ATP = 3-O-(5'-adenylyl)-L-seryl-[protein] + diphosphate. The catalysed reaction is L-threonyl-[protein] + ATP = 3-O-(5'-adenylyl)-L-threonyl-[protein] + diphosphate. It carries out the reaction L-tyrosyl-[protein] + ATP = O-(5'-adenylyl)-L-tyrosyl-[protein] + diphosphate. It catalyses the reaction L-histidyl-[protein] + UTP = N(tele)-(5'-uridylyl)-L-histidyl-[protein] + diphosphate. The enzyme catalyses L-seryl-[protein] + UTP = O-(5'-uridylyl)-L-seryl-[protein] + diphosphate. The catalysed reaction is L-tyrosyl-[protein] + UTP = O-(5'-uridylyl)-L-tyrosyl-[protein] + diphosphate. Nucleotidyltransferase involved in the post-translational modification of proteins. It can catalyze the addition of adenosine monophosphate (AMP) or uridine monophosphate (UMP) to a protein, resulting in modifications known as AMPylation and UMPylation. The protein is Protein nucleotidyltransferase YdiU of Salmonella schwarzengrund (strain CVM19633).